A 301-amino-acid polypeptide reads, in one-letter code: Probable DNA-directed RNA polymerase III subunit rpc6 (301 aa).

The protein belongs to the eukaryotic RPC34/RPC39 RNA polymerase subunit family. Component of the RNA polymerase III (Pol III) complex consisting of 17 subunits. Interacts with TFIIB.

It is found in the nucleus. DNA-dependent RNA polymerase catalyzes the transcription of DNA into RNA using the four ribonucleoside triphosphates as substrates. Specific peripheric component of RNA polymerase III which synthesizes small RNAs, such as 5S rRNA and tRNAs. This chain is Probable DNA-directed RNA polymerase III subunit rpc6 (rpc6), found in Schizosaccharomyces pombe (strain 972 / ATCC 24843) (Fission yeast).